Here is a 778-residue protein sequence, read N- to C-terminus: Melanoma-associated antigen D1 (778 aa).

Disordered stretches follow at residues 41 to 60 (PTNQATAAASPQSSQPPTAN), 78 to 123 (FKVQ…KGPN), and 182 to 333 (KAWN…PAWQ). Tyr-92 carries the post-translational modification Phosphotyrosine. Composition is skewed to polar residues over residues 104 to 118 (PNTQPKAAFKSQNAT), 185 to 211 (NDTTKAPTADTQTQNVNQAKMATSQAD), 225 to 240 (TAQTSADGSQAQNLES), 253 to 263 (NNLNVEENSSG), and 300 to 319 (LAWQNPSGWQNQTARQTPPA). 19 tandem repeats follow at residues 296–301 (WQTPLA), 302–307 (WQNPSG), 308–313 (WQNQTA), 332–337 (WQNPVA), 338–343 (WQNPVI), 344–349 (WPNPVI), 350–355 (WQNPVI), 356–361 (WPNPIV), 362–367 (WPGPVV), 368–373 (WPNPLA), 374–379 (WQNPPG), 380–385 (WQTPPG), 386–391 (WQTPPG), 392–397 (WQGPPD), 398–403 (WQGPPD), 404–409 (WPLPPD), 410–415 (WPLPPD), 416–421 (WPLPTD), and 422–427 (WPLPPD). Residues 296–444 (WQTPLAWQNP…IPPDWQNLRP (149 aa)) form a 22 X 6 AA tandem repeats of W-[PQ]-X-P-X-X region. Residues 376–412 (NPPGWQTPPGWQTPPGWQGPPDWQGPPDWPLPPDWPL) form a disordered region. Over residues 377–397 (PPGWQTPPGWQTPPGWQGPPD) the composition is skewed to low complexity. Over residues 398–412 (WQGPPDWPLPPDWPL) the composition is skewed to pro residues. One copy of the 20; approximate repeat lies at 428 to 432 (WIPAD). 2 tandem repeats follow at residues 433–438 (WPIPPD) and 439–444 (WQNLRP). Residues 440–455 (QNLRPSPNLRPSPNSR) show a composition bias toward low complexity. Positions 440 to 466 (QNLRPSPNLRPSPNSRASQNPGAAQPR) are disordered. The 199-residue stretch at 471–669 (LQERANKLVK…RDWTAQFMEA (199 aa)) folds into the MAGE domain.

As to quaternary structure, interacts with DLX5, DLX7 and MSX2 and forms homomultimers. Interacts with UNC5A. Interacts with TRIM28 and PJA1. Interacts with NGFR/p75NTR and RORA. As to expression, expressed in bone marrow stromal cells from both multiple myeloma patients and healthy donors. Seems to be ubiquitously expressed.

The protein resides in the cytoplasm. Its subcellular location is the cell membrane. It is found in the nucleus. In terms of biological role, involved in the apoptotic response after nerve growth factor (NGF) binding in neuronal cells. Inhibits cell cycle progression, and facilitates NGFR-mediated apoptosis. May act as a regulator of the function of DLX family members. May enhance ubiquitin ligase activity of RING-type zinc finger-containing E3 ubiquitin-protein ligases. Proposed to act through recruitment and/or stabilization of the Ubl-conjugating enzyme (E2) at the E3:substrate complex. Plays a role in the circadian rhythm regulation. May act as RORA co-regulator, modulating the expression of core clock genes such as BMAL1 and NFIL3, induced, or NR1D1, repressed. This Homo sapiens (Human) protein is Melanoma-associated antigen D1 (MAGED1).